Consider the following 217-residue polypeptide: Orotidine 5'-phosphate decarboxylase (217 aa).

Substrate-binding positions include aspartate 14, lysine 36, 64–73, serine 120, 172–182, glycine 197, and arginine 198; these read DFKVADIPST and PGVGAQGGNLS. Residue lysine 66 is the Proton donor of the active site.

Belongs to the OMP decarboxylase family. Type 1 subfamily. As to quaternary structure, homodimer.

It carries out the reaction orotidine 5'-phosphate + H(+) = UMP + CO2. Its pathway is pyrimidine metabolism; UMP biosynthesis via de novo pathway; UMP from orotate: step 2/2. In terms of biological role, catalyzes the decarboxylation of orotidine 5'-monophosphate (OMP) to uridine 5'-monophosphate (UMP). This Methanococcus maripaludis (strain C6 / ATCC BAA-1332) protein is Orotidine 5'-phosphate decarboxylase.